The chain runs to 179 residues: Large ribosomal subunit protein uL5 (179 aa).

This sequence belongs to the universal ribosomal protein uL5 family. As to quaternary structure, part of the 50S ribosomal subunit; part of the 5S rRNA/L5/L18/L25 subcomplex. Contacts the 5S rRNA and the P site tRNA. Forms a bridge to the 30S subunit in the 70S ribosome.

Functionally, this is one of the proteins that bind and probably mediate the attachment of the 5S RNA into the large ribosomal subunit, where it forms part of the central protuberance. In the 70S ribosome it contacts protein S13 of the 30S subunit (bridge B1b), connecting the 2 subunits; this bridge is implicated in subunit movement. Contacts the P site tRNA; the 5S rRNA and some of its associated proteins might help stabilize positioning of ribosome-bound tRNAs. The polypeptide is Large ribosomal subunit protein uL5 (Dehalococcoides mccartyi (strain ATCC BAA-2266 / KCTC 15142 / 195) (Dehalococcoides ethenogenes (strain 195))).